The chain runs to 452 residues: Phosphoglucosamine mutase (452 aa).

The active-site Phosphoserine intermediate is Ser104. Mg(2+) contacts are provided by Ser104, Asp245, Asp247, and Asp249. A Phosphoserine modification is found at Ser104.

It belongs to the phosphohexose mutase family. The cofactor is Mg(2+). Post-translationally, activated by phosphorylation.

The catalysed reaction is alpha-D-glucosamine 1-phosphate = D-glucosamine 6-phosphate. Functionally, catalyzes the conversion of glucosamine-6-phosphate to glucosamine-1-phosphate. The chain is Phosphoglucosamine mutase from Gluconacetobacter diazotrophicus (strain ATCC 49037 / DSM 5601 / CCUG 37298 / CIP 103539 / LMG 7603 / PAl5).